Consider the following 384-residue polypeptide: Queuine tRNA-ribosyltransferase (384 aa).

The Proton acceptor role is filled by D103. Substrate-binding positions include 103–107, D157, Q200, and G227; that span reads DSGGF. The segment at 258–264 is RNA binding; that stretch reads GVGTYRE. Residue D277 is the Nucleophile of the active site. Positions 282-286 are RNA binding; important for wobble base 34 recognition; sequence TRLAR. Zn(2+) is bound by residues C315, C317, C320, and H346.

It belongs to the queuine tRNA-ribosyltransferase family. In terms of assembly, homodimer. Within each dimer, one monomer is responsible for RNA recognition and catalysis, while the other monomer binds to the replacement base PreQ1. Zn(2+) serves as cofactor.

It carries out the reaction 7-aminomethyl-7-carbaguanine + guanosine(34) in tRNA = 7-aminomethyl-7-carbaguanosine(34) in tRNA + guanine. It participates in tRNA modification; tRNA-queuosine biosynthesis. Its function is as follows. Catalyzes the base-exchange of a guanine (G) residue with the queuine precursor 7-aminomethyl-7-deazaguanine (PreQ1) at position 34 (anticodon wobble position) in tRNAs with GU(N) anticodons (tRNA-Asp, -Asn, -His and -Tyr). Catalysis occurs through a double-displacement mechanism. The nucleophile active site attacks the C1' of nucleotide 34 to detach the guanine base from the RNA, forming a covalent enzyme-RNA intermediate. The proton acceptor active site deprotonates the incoming PreQ1, allowing a nucleophilic attack on the C1' of the ribose to form the product. After dissociation, two additional enzymatic reactions on the tRNA convert PreQ1 to queuine (Q), resulting in the hypermodified nucleoside queuosine (7-(((4,5-cis-dihydroxy-2-cyclopenten-1-yl)amino)methyl)-7-deazaguanosine). The sequence is that of Queuine tRNA-ribosyltransferase from Synechococcus elongatus (strain ATCC 33912 / PCC 7942 / FACHB-805) (Anacystis nidulans R2).